Reading from the N-terminus, the 871-residue chain is Protein translocase subunit SecA (871 aa).

ATP-binding positions include Gln80, 98–102 (GEGKT), and Asp537.

The protein belongs to the SecA family. Monomer and homodimer. Part of the essential Sec protein translocation apparatus which comprises SecA, SecYEG and auxiliary proteins SecDF. Other proteins may also be involved. A single SecA monomer interacts with SecY in the channel.

It is found in the cell inner membrane. The protein localises to the cytoplasm. It carries out the reaction ATP + H2O + cellular proteinSide 1 = ADP + phosphate + cellular proteinSide 2.. In terms of biological role, part of the Sec protein translocase complex. Interacts with the SecYEG preprotein conducting channel. Has a central role in coupling the hydrolysis of ATP to the transfer of proteins into and across the cell membrane, serving as an ATP-driven molecular motor driving the stepwise translocation of polypeptide chains across the membrane. This Thermotoga maritima (strain ATCC 43589 / DSM 3109 / JCM 10099 / NBRC 100826 / MSB8) protein is Protein translocase subunit SecA.